The following is a 446-amino-acid chain: Chromosomal replication initiator protein DnaA (446 aa).

The domain I, interacts with DnaA modulators stretch occupies residues 1–92 (MENISDLWNS…SQAEEEIDLP (92 aa)). Residues 87 to 107 (EEIDLPPSKPNSAQDDSNHLP) are disordered. The domain II stretch occupies residues 93 to 109 (PSKPNSAQDDSNHLPQS). Residues 96 to 107 (PNSAQDDSNHLP) are compositionally biased toward polar residues. The domain III, AAA+ region stretch occupies residues 110–326 (MLNPKYTFDT…GALIRVVAYS (217 aa)). ATP is bound by residues Gly154, Gly156, Lys157, and Thr158. Residues 327-446 (SLINKDINAD…QVEEINDILK (120 aa)) form a domain IV, binds dsDNA region.

The protein belongs to the DnaA family. In terms of assembly, oligomerizes as a right-handed, spiral filament on DNA at oriC.

The protein localises to the cytoplasm. Its function is as follows. Plays an essential role in the initiation and regulation of chromosomal replication. ATP-DnaA binds to the origin of replication (oriC) to initiate formation of the DNA replication initiation complex once per cell cycle. Binds the DnaA box (a 9 base pair repeat at the origin) and separates the double-stranded (ds)DNA. Forms a right-handed helical filament on oriC DNA; dsDNA binds to the exterior of the filament while single-stranded (ss)DNA is stabiized in the filament's interior. The ATP-DnaA-oriC complex binds and stabilizes one strand of the AT-rich DNA unwinding element (DUE), permitting loading of DNA polymerase. After initiation quickly degrades to an ADP-DnaA complex that is not apt for DNA replication. Binds acidic phospholipids. This is Chromosomal replication initiator protein DnaA from Bacillus cereus (strain ATCC 10987 / NRS 248).